Here is a 341-residue protein sequence, read N- to C-terminus: S-adenosylmethionine:tRNA ribosyltransferase-isomerase (341 aa).

Belongs to the QueA family. Monomer.

It localises to the cytoplasm. The enzyme catalyses 7-aminomethyl-7-carbaguanosine(34) in tRNA + S-adenosyl-L-methionine = epoxyqueuosine(34) in tRNA + adenine + L-methionine + 2 H(+). The protein operates within tRNA modification; tRNA-queuosine biosynthesis. Transfers and isomerizes the ribose moiety from AdoMet to the 7-aminomethyl group of 7-deazaguanine (preQ1-tRNA) to give epoxyqueuosine (oQ-tRNA). This Clostridioides difficile (strain 630) (Peptoclostridium difficile) protein is S-adenosylmethionine:tRNA ribosyltransferase-isomerase.